The sequence spans 107 residues: Ribonuclease P protein subunit rpr2 (107 aa).

Zn(2+)-binding residues include Cys59, Cys62, Cys93, and Cys96.

The protein belongs to the eukaryotic/archaeal RNase P protein component 4 family. Zn(2+) is required as a cofactor.

The protein localises to the cytoplasm. The protein resides in the nucleus. It catalyses the reaction Endonucleolytic cleavage of RNA, removing 5'-extranucleotides from tRNA precursor.. Functionally, component of ribonuclease P, a protein complex that generates mature tRNA molecules by cleaving their 5'-ends. In Schizosaccharomyces pombe (strain 972 / ATCC 24843) (Fission yeast), this protein is Ribonuclease P protein subunit rpr2 (rpr2).